A 494-amino-acid chain; its full sequence is Myocyte-specific enhancer factor 2A (494 aa).

An MADS-box domain is found at 3–57 (RKKIQITRIMDERNRQVTFTKRKFGLMKKAYELSVLCDCEIALIIFNSSNKLFQY). Positions 58 to 86 (ASTDMDKVLLKYTEYNEPHESRTNSDIVE) form a DNA-binding region, mef2-type. Residue Ser59 is modified to Phosphoserine; by CK2. Phosphoserine occurs at positions 98 and 108. Residues 171-181 (TLTDSSMLSPP) are compositionally biased toward low complexity. The segment at 171–218 (TLTDSSMLSPPQTTLHRNVSPGAPQRPPSTGNAGGMLSTTDLIVPNGA) is disordered. Phosphoserine is present on Ser233. Positions 238 to 268 (GATGANSLGKVMPTKSPPPPGGGNLGMNSRK) are disordered. The residue at position 247 (Lys247) is an N6-acetyllysine. At Ser253 the chain carries Phosphoserine. The tract at residues 264–281 (MNSRKPDLRVVIPPSSKG) is required for interaction with MAPKs. Residues Thr302 and Thr309 each carry the phosphothreonine; by MAPK7 and MAPK14 modification. A Phosphoserine; by MAPK7 modification is found at Ser345. The segment covering 380-392 (SNLSINTNQNINI) has biased composition (polar residues). The interval 380 to 494 (SNLSINTNQN…KRMRMDAWVT (115 aa)) is disordered. N6-acetyllysine; alternate is present on Lys393. Lys393 participates in a covalent cross-link: Glycyl lysine isopeptide (Lys-Gly) (interchain with G-Cter in SUMO); alternate. Ser398 is subject to Phosphoserine; by CDK5. Thr405 carries the post-translational modification Phosphothreonine. The segment covering 418–432 (QPPPPPPQPQPPQPQ) has biased composition (pro residues). The residue at position 440 (Ser440) is a Phosphoserine. Residues 440-453 (SPVDSLSSSSSSYD) show a composition bias toward low complexity. 2 stretches are compositionally biased toward basic and acidic residues: residues 454-464 (GSDREDPRGDF) and 475-494 (NTED…AWVT).

Binds DNA as a homo- or heterodimer. Dimerizes with MEF2D. Interacts with HDAC7. Interacts with PIAS1; the interaction enhances sumoylation. Interacts with HDAC4, HDAC9 and SLC2A4RG. Interacts (via the N-terminal) with MAPK7; the interaction results in the phosphorylation and transcriptional activity of MEF2A. In terms of processing, constitutive phosphorylation on Ser-398 promotes Lys-393 sumoylation thus preventing acetylation at this site. Dephosphorylation on Ser-398 by PPP3CA upon neuron depolarization promotes a switch from sumoylation to acetylation on residue Lys-393 leading to inhibition of dendrite claw differentiation. Phosphorylation on Thr-302 and Thr-309 are the main sites involved in p38 MAPK signaling and activate transcription. Phosphorylated on these sites by MAPK14/p38alpha and MAPK11/p38beta, but not by MAPK13/p38delta nor by MAPK12/p38gamma. Phosphorylation on Ser-398 by CDK5 induced by neurotoxicity inhibits MEF2A transcriptional activation leading to apoptosis of cortical neurons. Phosphorylation on Thr-302, Thr-309 and Ser-345 can be induced by EGF. Sumoylation on Lys-393 is enhanced by PIAS1 and represses transcriptional activity. Phosphorylation on Ser-398 is required for sumoylation. Has no effect on nuclear location nor on DNA binding. Sumoylated with SUMO1 and, to a lesser extent with SUMO2 and SUMO3. PIASx facilitates sumoylation in postsynaptic dendrites in the cerebellar cortex and promotes their morphogenesis. Post-translationally, acetylation on Lys-393 activates transcriptional activity. Acetylated by p300 on several sites in diffentiating myocytes. Acetylation on Lys-4 increases DNA binding and transactivation. Hyperacetylation by p300 leads to enhanced cardiac myocyte growth and heart failure. In terms of processing, proteolytically cleaved in cerebellar granule neurons on several sites by caspase 3 and caspase 7 following neurotoxicity. Preferentially cleaves the CDK5-mediated hyperphosphorylated form which leads to neuron apoptosis and transcriptional inactivation.

The protein localises to the nucleus. Functionally, transcriptional activator which binds specifically to the MEF2 element, 5'-YTA[AT](4)TAR-3', found in numerous muscle-specific genes. Also involved in the activation of numerous growth factor- and stress-induced genes. Mediates cellular functions not only in skeletal and cardiac muscle development, but also in neuronal differentiation and survival. Plays diverse roles in the control of cell growth, survival and apoptosis via p38 MAPK signaling in muscle-specific and/or growth factor-related transcription. In cerebellar granule neurons, phosphorylated and sumoylated MEF2A represses transcription of NUR77 promoting synaptic differentiation. Associates with chromatin to the ZNF16 promoter. This is Myocyte-specific enhancer factor 2A (MEF2A) from Pongo abelii (Sumatran orangutan).